Here is a 368-residue protein sequence, read N- to C-terminus: Peptidoglycan-recognition protein LA (368 aa).

The Cytoplasmic segment spans residues 1-127 (MFEENNSPTT…KSPSRRVTRN (127 aa)). 2 disordered regions span residues 21-46 (QRASPAQRLHNLTSAGSSTSSSGLPL) and 101-122 (INSNNANGNGNANRSRDKSPSR). Composition is skewed to low complexity over residues 33–43 (TSAGSSTSSSG) and 102–113 (NSNNANGNGNAN). The chain crosses the membrane as a helical span at residues 128–148 (TILLITLILLVLATGLIVLYV). Residues 149–368 (ELNRPKPELP…MKTESWDAKQ (220 aa)) are Extracellular-facing. Cys-221 and Cys-227 are oxidised to a cystine. The region spanning 233–320 (TIQDSAIAEK…DVDYKLVAQN (88 aa)) is the N-acetylmuramoyl-L-alanine amidase domain. Asn-273 and Asn-320 each carry an N-linked (GlcNAc...) asparagine glycan.

This sequence belongs to the N-acetylmuramoyl-L-alanine amidase 2 family. In terms of tissue distribution, expressed in uninduced hemocytes and mbn-2 cells.

It is found in the cell membrane. Functionally, peptidoglycan-recognition protein probably involved in innate immunity by binding to peptidoglycans (PGN) of bacteria and activating the immune response. The chain is Peptidoglycan-recognition protein LA (PGRP-LA) from Drosophila melanogaster (Fruit fly).